The primary structure comprises 252 residues: MSGHSKWATIKRKKAVNDAQRSKNFAKLIRLIEVAAKQGGPDLAGNPGLAEAVQKAKKNSVPNDNIDRAIKRGSGLTGEHINYVSLVYEVKAFDGVALLVECLTDNKNRCAAGIRSIVTRSGCSMVNPGSLAYNFKRKGIVVLQDRDANGNLLSEDLVLSAVLEAEVDDIVPTGDCGFEIIAEPSNLSAVCNALRDSGIQYRSVETVYVPNSTVSLPEQKYDRIIRMIEALEESDDVQGVYTNLSGKDLACE.

Belongs to the TACO1 family.

The protein localises to the cytoplasm. This chain is Probable transcriptional regulatory protein TW504, found in Tropheryma whipplei (strain TW08/27) (Whipple's bacillus).